We begin with the raw amino-acid sequence, 359 residues long: MAGPPGDDIFRATLAAVAPGTPFRDGLERILRGHTGALIVLGHDKVVEGLCTGGFELDVEFSATRLRELAKMDGAIVLSSDLARIVRAAVHLVPDPTVPTEESGTRHRTAERVAKQTGFPVISVSQSMHIIALYVAGRRYVLDGAAAILSRANQALATLERYKLRLDEVAGTLSALEIEDLVTVRDAISVSQRLEMVRRIADEIESYVVELGTDGRLLSLQLEELMAGVETERELTVRDYLPVGSRAGNAAQVLAELSAMSPTDLLDLTVIARVIGFSGGADILDRQISPRGYRMLAKVPRLPRMVVDRLVDHFSTLQKLLAAGVDDLQAVDGVGETRARAVREGLSRLAESSILERYV.

Positions 7 to 145 constitute a DAC domain; that stretch reads DDIFRATLAA…AGRRYVLDGA (139 aa). Residues glycine 74, leucine 92, and 105–109 each bind ATP; that span reads TRHRT.

Belongs to the DisA family. In terms of assembly, homooctamer. Requires Mg(2+) as cofactor.

It carries out the reaction 2 ATP = 3',3'-c-di-AMP + 2 diphosphate. Participates in a DNA-damage check-point that is active prior to asymmetric division when DNA is damaged. DisA forms globular foci that rapidly scan along the chromosomes during sporulation, searching for lesions. When a lesion is present, DisA pauses at the lesion site. This triggers a cellular response that culminates in a temporary block in sporulation initiation. Functionally, also has diadenylate cyclase activity, catalyzing the condensation of 2 ATP molecules into cyclic di-AMP (c-di-AMP). c-di-AMP acts as a signaling molecule that couples DNA integrity with progression of sporulation. The rise in c-di-AMP level generated by DisA while scanning the chromosome, operates as a positive signal that advances sporulation; upon encountering a lesion, the DisA focus arrests at the damaged site and halts c-di-AMP synthesis. This chain is DNA integrity scanning protein DisA, found in Parafrankia sp. (strain EAN1pec).